A 103-amino-acid chain; its full sequence is MSNRRLFLKSIPIMAAAGAVGMAGLARAANPMVAETDPQAAALGYKADTTKVDQAKYPKHAPDQHCGNCALYQGGTAAQGGCPLFAGKDVANKGWCSAWAKKA.

Positions 1–28 (MSNRRLFLKSIPIMAAAGAVGMAGLARA) are cleaved as a signal peptide. [4Fe-4S] cluster is bound by residues Cys-66, Cys-69, Cys-82, and Cys-96.

This sequence belongs to the high-potential iron-sulfur protein (HiPIP) family. Homodimer.

Its subcellular location is the periplasm. Specific class of high-redox-potential 4Fe-4S ferredoxins. Functions in anaerobic electron transport in most purple and in some other photosynthetic bacteria and in at least one genus (Paracoccus) of halophilic, denitrifying bacteria. The polypeptide is High-potential iron-sulfur protein (hip) (Ralstonia nicotianae (strain ATCC BAA-1114 / GMI1000) (Ralstonia solanacearum)).